We begin with the raw amino-acid sequence, 273 residues long: 4-hydroxy-tetrahydrodipicolinate reductase (273 aa).

Residues 12–17 (GAGGRM) and Glu-38 each bind NAD(+). Arg-39 contributes to the NADP(+) binding site. Residues 102-104 (GTT) and 126-129 (AANF) contribute to the NAD(+) site. His-159 (proton donor/acceptor) is an active-site residue. His-160 is a (S)-2,3,4,5-tetrahydrodipicolinate binding site. Lys-163 (proton donor) is an active-site residue. 169 to 170 (GT) is a (S)-2,3,4,5-tetrahydrodipicolinate binding site.

The protein belongs to the DapB family. As to quaternary structure, homotetramer.

The protein resides in the cytoplasm. The catalysed reaction is (S)-2,3,4,5-tetrahydrodipicolinate + NAD(+) + H2O = (2S,4S)-4-hydroxy-2,3,4,5-tetrahydrodipicolinate + NADH + H(+). The enzyme catalyses (S)-2,3,4,5-tetrahydrodipicolinate + NADP(+) + H2O = (2S,4S)-4-hydroxy-2,3,4,5-tetrahydrodipicolinate + NADPH + H(+). It functions in the pathway amino-acid biosynthesis; L-lysine biosynthesis via DAP pathway; (S)-tetrahydrodipicolinate from L-aspartate: step 4/4. Catalyzes the conversion of 4-hydroxy-tetrahydrodipicolinate (HTPA) to tetrahydrodipicolinate. This Salmonella gallinarum (strain 287/91 / NCTC 13346) protein is 4-hydroxy-tetrahydrodipicolinate reductase.